We begin with the raw amino-acid sequence, 757 residues long: Myb-related protein A (757 aa).

HTH myb-type domains are found at residues 30-81 (KKIC…QKVL), 82-137 (NPEL…NPEV), and 138-188 (KKSS…RRKV). 3 consecutive DNA-binding regions (H-T-H motif) follow at residues 58 to 81 (WAFIASHLQNRSDFQCQHRWQKVL), 110 to 133 (WSLIAKHLKGRIGKQCRERWHNHL), and 161 to 184 (WAEIAKLLPGRTDNSIKNHWNSTM). The segment at 187-209 (KVEQEGYLQDGTKSSSERTGSST) is disordered. The segment covering 197 to 209 (GTKSSSERTGSST) has biased composition (polar residues). Residues 235–300 (IPVYQYASPE…RLSSQAGSLP (66 aa)) are transcriptional activation domain. The interval 303–558 (SGSFVMEDCV…IRRSLLGSTP (256 aa)) is negative regulatory domain.

As to quaternary structure, component of the DREAM complex. Expressed ubiquitously.

The protein localises to the nucleus. Its function is as follows. Strong transcriptional activator; DNA-binding protein that specifically recognize the sequence 5'-YAAC[GT]G-3'. Could have a role in the proliferation and/or differentiation of neurogenic, spermatogenic and B-lymphoid cells. This is Myb-related protein A (MYBL1) from Gallus gallus (Chicken).